Consider the following 522-residue polypeptide: MQLTLWTYEGPPHVGAMRIAASMKGVHYVLHAPQGDTYADLLFTMIERRDQRPPVTYTTFQARDLGGDTAELVKRHVREAVDRFQPDALLVGESCTAELIQDQPGALAAGMGLTMPIVNLELPAYSKKENWGAAETFYQLVRTLLKDQAPAELNHDPKAWQHEGRRPRVNLLGPSLLGFRCRDDVLEIQRLLNMHGIDVGVVAPLGATVADVHRLPEADLNVCLYPEIAESSCAWLERSFGIPFTTTVPIGIGATHDFLVEVHNLLGMTPPSPQEGIRQSRLPWYSESVDSTYLTGKRVFIFGDGTHALAAARICKEELGFEVVGLGTYSREMARPVRAAAKAMGIEALISDDYLAVEAAMAAAAPELVLGTQMERHSAKRLGLPCAVISTPMHVQDVPARNSPQMGWEGANVIFDSWVHPLMMGLEEHLIGMFRHDFEFVDGHQSHLGHSGGSGAIADTEVAVSTLTDELVWTAEGEAELKKIPFFVRGKVRRNTEAFAKSTGRNQIDSETLYDAKAHFSA.

Residue Asp-36 participates in [4Fe-4S] cluster binding. Residue Asp-290 is the Proton donor of the active site. Residue 425 to 426 coordinates substrate; the sequence is GL.

Belongs to the ChlB/BchB/BchZ family. In terms of assembly, protochlorophyllide reductase is composed of three subunits; ChlL, ChlN and ChlB. Forms a heterotetramer of two ChlB and two ChlN subunits. [4Fe-4S] cluster serves as cofactor.

It carries out the reaction chlorophyllide a + oxidized 2[4Fe-4S]-[ferredoxin] + 2 ADP + 2 phosphate = protochlorophyllide a + reduced 2[4Fe-4S]-[ferredoxin] + 2 ATP + 2 H2O. The protein operates within porphyrin-containing compound metabolism; chlorophyll biosynthesis (light-independent). Component of the dark-operative protochlorophyllide reductase (DPOR) that uses Mg-ATP and reduced ferredoxin to reduce ring D of protochlorophyllide (Pchlide) to form chlorophyllide a (Chlide). This reaction is light-independent. The NB-protein (ChlN-ChlB) is the catalytic component of the complex. The chain is Light-independent protochlorophyllide reductase subunit B from Synechococcus sp. (strain CC9311).